The primary structure comprises 37 residues: L-amino-acid oxidase (37 aa).

It belongs to the flavin monoamine oxidase family. FIG1 subfamily. Homodimer; non-covalently linked. FAD serves as cofactor. In terms of processing, N-Glycosylated. As to expression, expressed by the venom gland.

It localises to the secreted. It catalyses the reaction an L-alpha-amino acid + O2 + H2O = a 2-oxocarboxylate + H2O2 + NH4(+). It carries out the reaction L-leucine + O2 + H2O = 4-methyl-2-oxopentanoate + H2O2 + NH4(+). The catalysed reaction is L-phenylalanine + O2 + H2O = 3-phenylpyruvate + H2O2 + NH4(+). The enzyme catalyses L-tryptophan + O2 + H2O = indole-3-pyruvate + H2O2 + NH4(+). It catalyses the reaction L-methionine + O2 + H2O = 4-methylsulfanyl-2-oxobutanoate + H2O2 + NH4(+). It carries out the reaction L-isoleucine + O2 + H2O = (S)-3-methyl-2-oxopentanoate + H2O2 + NH4(+). The catalysed reaction is L-arginine + O2 + H2O = 5-guanidino-2-oxopentanoate + H2O2 + NH4(+). The enzyme catalyses L-histidine + O2 + H2O = 3-(imidazol-5-yl)pyruvate + H2O2 + NH4(+). It catalyses the reaction L-valine + O2 + H2O = 3-methyl-2-oxobutanoate + H2O2 + NH4(+). In terms of biological role, catalyzes an oxidative deamination of predominantly hydrophobic and aromatic L-amino acids, thus producing hydrogen peroxide that may contribute to the diverse toxic effects of this enzyme. Is highly active on L-Leu, L-Met, moderately active on L-Arg, L-Trp, L-Phe, L-Val, L-His, and L-Ile, and is weakly or not active on L-Cys, L-Lys, L-Ala, L-Thr, L-Asp, L-Ser, and L-Pro. Exhibits diverse biological activities, such as hemorrhage, edema, apoptosis of vascular endothelial cells or tumor cell lines, as well as regulation of platelet aggregation. Effects of snake L-amino oxidases on platelets are controversial, since they either induce aggregation or inhibit agonist-induced aggregation. These different effects are probably due to different experimental conditions. This protein induce hemolysis and has antibacterial and antiparasitic activities (against the Gram-positive S.aureus). Tested in vivo, this protein significantly inhibits Ehrlich ascite tumors growth and induces an influx of polymorphonuclear cells, as well as spontaneous liberation of hydrogen peroxide from peritoneal macrophages. In Bothrops jararaca (Jararaca), this protein is L-amino-acid oxidase.